Here is a 194-residue protein sequence, read N- to C-terminus: Glycerol-3-phosphate acyltransferase (194 aa).

A run of 6 helical transmembrane segments spans residues 2 to 22 (AFFC…GVWI), 52 to 72 (LGVA…YIAS), 80 to 100 (DLVI…FISF), 112 to 132 (VFLF…ILVA), 137 to 157 (YVSL…FFTH), and 161 to 181 (YLFA…KTNI).

The protein belongs to the PlsY family. Probably interacts with PlsX.

It is found in the cell inner membrane. It catalyses the reaction an acyl phosphate + sn-glycerol 3-phosphate = a 1-acyl-sn-glycero-3-phosphate + phosphate. It participates in lipid metabolism; phospholipid metabolism. Catalyzes the transfer of an acyl group from acyl-phosphate (acyl-PO(4)) to glycerol-3-phosphate (G3P) to form lysophosphatidic acid (LPA). This enzyme utilizes acyl-phosphate as fatty acyl donor, but not acyl-CoA or acyl-ACP. This is Glycerol-3-phosphate acyltransferase from Fusobacterium nucleatum subsp. nucleatum (strain ATCC 25586 / DSM 15643 / BCRC 10681 / CIP 101130 / JCM 8532 / KCTC 2640 / LMG 13131 / VPI 4355).